Reading from the N-terminus, the 1013-residue chain is Trehalose monomycolate exporter MmpL3 (1013 aa).

Over 1–14 the chain is Cytoplasmic; that stretch reads MFAWWGRTVYQFRY. A helical transmembrane segment spans residues 15-35; the sequence is IVIGVMVALCLGGGVYGISLG. Residues 36-196 lie on the Periplasmic side of the membrane; it reads NHVTQSGFYD…KRAEVAAIPL (161 aa). An a 1,2-diacylglycero-3-phosphoethanolamine-binding site is contributed by 40–44; sequence QSGFY. 2 helical membrane-spanning segments follow: residues 197-217 and 218-238; these read VAVV…PAII and GGLA…FTPV. At 239 to 240 the chain is on the periplasmic side; sequence HF. A helical transmembrane segment spans residues 241–261; the sequence is FAQPVVTLIGLGIAIDYGLFI. Residues 262–290 are Cytoplasmic-facing; the sequence is VSRFREEIAEGYDTEAAVRRTVMTSGRTV. The chain crosses the membrane as a helical span at residues 291–311; it reads VFSAVIIVASSVPLLLFPQGF. Over 312–317 the chain is Periplasmic; that stretch reads LKSITY. A helical transmembrane segment spans residues 318–338; the sequence is AIIASVMLAAILSITVLAAAL. At 339–401 the chain is on the cytoplasmic side; it reads AILGPRVDAL…RLVNVVMKRP (63 aa). A helical transmembrane segment spans residues 402–422; sequence IAFAAPILVVMVLLIIPLGQL. At 423-567 the chain is on the periplasmic side; that stretch reads SLGGISEKYL…HSLFDKLPLM (145 aa). The tract at residues 485–513 is disordered; it reads SGFTDPDNDPEKMWKERPANDSGSKDPSV. Residues 493 to 512 are compositionally biased toward basic and acidic residues; it reads DPEKMWKERPANDSGSKDPS. Residues 568–588 traverse the membrane as a helical segment; that stretch reads ALILIVTTTVLMFLAFGSVVL. The Cytoplasmic segment spans residues 589–591; the sequence is PIK. The chain crosses the membrane as a helical span at residues 592 to 612; the sequence is AALMSALTLGSTMGILTWMFV. Residues 613–630 lie on the Periplasmic side of the membrane; that stretch reads DGHGSGLMNYTPQPLMAP. Residues 631–651 form a helical membrane-spanning segment; the sequence is MIGLIIAVIWGLSTDYEVFLV. Asp645 provides a ligand contact to SQ109. Residues 652-678 are Cytoplasmic-facing; the sequence is SRMVEARERGMSTAEAIRIGTATTGRL. The chain crosses the membrane as a helical span at residues 679–699; that stretch reads ITGAALILAVVAGAFVFSDLV. Residues 700-703 are Periplasmic-facing; sequence MMKY. The helical transmembrane segment at 704 to 724 threads the bilayer; it reads LAFGLLIALLLDATIIRMFLV. At 725–1013 the chain is on the cytoplasmic side; that stretch reads PAVMKLLGDD…QDLLRREGRL (289 aa). The segment at 754–1013 is disordered; sequence TELPDERKRP…QDLLRREGRL (260 aa). A compositionally biased stretch (basic and acidic residues) spans 757 to 772; the sequence is PDERKRPTVRESETDQ. Composition is skewed to pro residues over residues 792–803 and 820–829; these read HPAPEPVRPMPP and PPQPPQPPQA. A compositionally biased stretch (low complexity) spans 842–867; it reads RFAMARNAVRNAVNSAVHGGAGSAAA. Pro residues predominate over residues 875 to 885; the sequence is PGGPAQPPAPP. The segment covering 973-996 has biased composition (basic and acidic residues); it reads REQEPSTEKLNTREDAPEDPETKR.

The protein belongs to the resistance-nodulation-cell division (RND) (TC 2.A.6) family. MmpL subfamily. In terms of assembly, monomer. Interacts with TtfA (via N-terminus); active trehalose monomycolate (TMM) biosynthesis is not required for the complex formation. Interacts with MSMEG_5308.

It is found in the cell inner membrane. The protein localises to the cell septum. The protein resides in the cell tip. With respect to regulation, inhibited by the antimycobacterial compound BM212, a pyrrole derivative. Inhibited by the antitubercular drug SQ109. Inhibited by the adamantyl urea derivative AU1235, the indole carboxamide ICA38 and rimonabant, the antagonist for the cannabinoid receptor CB1. The dissociation constant (Kd) values for SQ109, AU1235, ICA38 and rimonabant are 1.65 uM, 0.29, 0.16 and 29.5, respectively. Inhibitory effects are due to binding of the inhibitors at the proton-transportation channel most likely dissipating the transmembrane electrochemical proton gradient needed for substrate translocation. Its function is as follows. Transports trehalose monomycolate (TMM) to the cell wall. Flips TMM across the inner membrane. Membrane potential is not required for this function. Transports probably phosphatidylethanolamine (PE) as well. Binds specifically both TMM and PE, but not trehalose dimycolate (TDM). Also binds diacylglycerol (DAG) and other phospholipids, including phosphatidylglycerol (PG), phosphatidylinositol (PI), and cardiolipin (CDL). Contributes to membrane potential, cell wall composition, antibiotic susceptibility and fitness. In Mycolicibacterium smegmatis (strain ATCC 700084 / mc(2)155) (Mycobacterium smegmatis), this protein is Trehalose monomycolate exporter MmpL3.